The primary structure comprises 547 residues: Signal recognition particle receptor subunit alpha homolog (547 aa).

Residues 124-174 are disordered; the sequence is LENETDTKSLPVEANNDNSARKKNEYEMKKKGAQSKQTNAPKKGKKQLRKW. Residues 142 to 153 are compositionally biased toward basic and acidic residues; that stretch reads SARKKNEYEMKK. The segment at 343-546 is NG domain; it reads YTISLIGVNG…SVDWVVDQLM (204 aa). GTP is bound by residues 349–356, 437–441, and 498–501; these read GVNGVGKS, DTAGR, and SKVD.

This sequence belongs to the GTP-binding SRP family. In terms of assembly, heterodimer of an alpha and a beta chain.

It is found in the endoplasmic reticulum membrane. In terms of biological role, component of the SRP (signal recognition particle) receptor (SR). Ensures, in conjunction with the signal recognition particle, the correct targeting of the nascent secretory proteins to the endoplasmic reticulum membrane system. GTP hydrolysis may enhance the fidelity of and provide unidirectionality to the targeting reaction. This Schizosaccharomyces pombe (strain 972 / ATCC 24843) (Fission yeast) protein is Signal recognition particle receptor subunit alpha homolog (srp101).